A 351-amino-acid chain; its full sequence is Ferredoxin--NADP reductase (351 aa).

FAD is bound by residues D44, Q52, Y57, I97, F132, D296, and S337.

This sequence belongs to the ferredoxin--NADP reductase type 2 family. Homodimer. FAD is required as a cofactor.

It carries out the reaction 2 reduced [2Fe-2S]-[ferredoxin] + NADP(+) + H(+) = 2 oxidized [2Fe-2S]-[ferredoxin] + NADPH. The sequence is that of Ferredoxin--NADP reductase from Burkholderia vietnamiensis (strain G4 / LMG 22486) (Burkholderia cepacia (strain R1808)).